The following is a 477-amino-acid chain: Cysteine--tRNA ligase (477 aa).

Residue Cys42 coordinates Zn(2+). The 'HIGH' region signature appears at 44–54; the sequence is ATVQGLPHIGH. 3 residues coordinate Zn(2+): Cys220, His245, and Glu249. The 'KMSKS' region motif lies at 276 to 280; the sequence is KMSKS. Lys279 lines the ATP pocket.

It belongs to the class-I aminoacyl-tRNA synthetase family. Monomer. It depends on Zn(2+) as a cofactor.

It localises to the cytoplasm. It carries out the reaction tRNA(Cys) + L-cysteine + ATP = L-cysteinyl-tRNA(Cys) + AMP + diphosphate. The sequence is that of Cysteine--tRNA ligase from Mycolicibacterium smegmatis (strain ATCC 700084 / mc(2)155) (Mycobacterium smegmatis).